We begin with the raw amino-acid sequence, 380 residues long: uncharacterized protein (380 aa).

This is an uncharacterized protein from Methanocaldococcus jannaschii (strain ATCC 43067 / DSM 2661 / JAL-1 / JCM 10045 / NBRC 100440) (Methanococcus jannaschii).